The chain runs to 213 residues: ATP synthase peripheral stalk subunit OSCP, mitochondrial (213 aa).

The N-terminal 23 residues, 1–23 (MAALAVSGLSQQVRCFSTSVVRP), are a transit peptide targeting the mitochondrion. The SIFI-degron signature appears at 5-23 (AVSGLSQQVRCFSTSVVRP). An N6-acetyllysine mark is found at lysine 54, lysine 60, lysine 70, and lysine 73. An N6-succinyllysine modification is found at lysine 90. Residues lysine 100, lysine 158, and lysine 162 each carry the N6-acetyllysine; alternate modification. 3 positions are modified to N6-succinyllysine; alternate: lysine 100, lysine 158, and lysine 162. An N6-acetyllysine mark is found at lysine 172, lysine 176, and lysine 192. An N6-succinyllysine modification is found at lysine 199.

Belongs to the ATPase delta chain family. In terms of assembly, component of the ATP synthase complex composed at least of ATP5F1A/subunit alpha, ATP5F1B/subunit beta, ATP5MC1/subunit c (homooctomer), MT-ATP6/subunit a, MT-ATP8/subunit 8, ATP5ME/subunit e, ATP5MF/subunit f, ATP5MG/subunit g, ATP5MK/subunit k, ATP5MJ/subunit j, ATP5F1C/subunit gamma, ATP5F1D/subunit delta, ATP5F1E/subunit epsilon, ATP5PF/subunit F6, ATP5PB/subunit b, ATP5PD/subunit d, ATP5PO/subunit OSCP. ATP synthase complex consists of a soluble F(1) head domain (subunits alpha(3) and beta(3)) - the catalytic core - and a membrane F(0) domain - the membrane proton channel (subunits c, a, 8, e, f, g, k and j). These two domains are linked by a central stalk (subunits gamma, delta, and epsilon) rotating inside the F1 region and a stationary peripheral stalk (subunits F6, b, d, and OSCP). Post-translationally, acetylation at Lys-162 decreases ATP production. Deacetylated by SIRT3. In terms of processing, in response to mitochondrial stress, the precursor protein is ubiquitinated by the SIFI complex in the cytoplasm before mitochondrial import, leading to its degradation. Within the SIFI complex, UBR4 initiates ubiquitin chain that are further elongated or branched by KCMF1.

The protein localises to the mitochondrion. The protein resides in the mitochondrion inner membrane. In terms of biological role, subunit OSCP, of the mitochondrial membrane ATP synthase complex (F(1)F(0) ATP synthase or Complex V) that produces ATP from ADP in the presence of a proton gradient across the membrane which is generated by electron transport complexes of the respiratory chain. ATP synthase complex consist of a soluble F(1) head domain - the catalytic core - and a membrane F(1) domain - the membrane proton channel. These two domains are linked by a central stalk rotating inside the F(1) region and a stationary peripheral stalk. During catalysis, ATP synthesis in the catalytic domain of F(1) is coupled via a rotary mechanism of the central stalk subunits to proton translocation. In vivo, can only synthesize ATP although its ATP hydrolase activity can be activated artificially in vitro. Part of the complex F(0) domain. Part of the complex F(0) domain and the peripheric stalk, which acts as a stator to hold the catalytic alpha(3)beta(3) subcomplex and subunit a/ATP6 static relative to the rotary elements. This is ATP synthase peripheral stalk subunit OSCP, mitochondrial from Bos taurus (Bovine).